A 272-amino-acid polypeptide reads, in one-letter code: Putative B3 domain-containing protein Os02g0455900 (272 aa).

A DNA-binding region (TF-B3) is located at residues 30-134 (GKVLMPSDVS…RFFICCRCTC (105 aa)). Residues 189-227 (TASLGCAAAQPPQVPPTPTPRRRRRSMMVHPEPPEHTTD) form a disordered region.

The protein localises to the nucleus. This is Putative B3 domain-containing protein Os02g0455900 from Oryza sativa subsp. japonica (Rice).